Consider the following 107-residue polypeptide: Ribonuclease P protein component 4 (107 aa).

Cysteine 66, cysteine 69, cysteine 92, and cysteine 95 together coordinate Zn(2+).

This sequence belongs to the eukaryotic/archaeal RNase P protein component 4 family. Consists of a catalytic RNA component and at least 4-5 protein subunits. Requires Zn(2+) as cofactor.

It is found in the cytoplasm. It catalyses the reaction Endonucleolytic cleavage of RNA, removing 5'-extranucleotides from tRNA precursor.. Its function is as follows. Part of ribonuclease P, a protein complex that generates mature tRNA molecules by cleaving their 5'-ends. This Methanosarcina barkeri (strain Fusaro / DSM 804) protein is Ribonuclease P protein component 4.